Consider the following 355-residue polypeptide: Phosphoribosylformylglycinamidine cyclo-ligase (355 aa).

Belongs to the AIR synthase family.

It localises to the cytoplasm. The enzyme catalyses 2-formamido-N(1)-(5-O-phospho-beta-D-ribosyl)acetamidine + ATP = 5-amino-1-(5-phospho-beta-D-ribosyl)imidazole + ADP + phosphate + H(+). It functions in the pathway purine metabolism; IMP biosynthesis via de novo pathway; 5-amino-1-(5-phospho-D-ribosyl)imidazole from N(2)-formyl-N(1)-(5-phospho-D-ribosyl)glycinamide: step 2/2. This chain is Phosphoribosylformylglycinamidine cyclo-ligase, found in Paraburkholderia phytofirmans (strain DSM 17436 / LMG 22146 / PsJN) (Burkholderia phytofirmans).